We begin with the raw amino-acid sequence, 129 residues long: Small ribosomal subunit protein uS8 (129 aa).

It belongs to the universal ribosomal protein uS8 family. In terms of assembly, part of the 30S ribosomal subunit.

One of the primary rRNA binding proteins, it binds directly to 16S rRNA central domain where it helps coordinate assembly of the platform of the 30S subunit. In Picrophilus torridus (strain ATCC 700027 / DSM 9790 / JCM 10055 / NBRC 100828 / KAW 2/3), this protein is Small ribosomal subunit protein uS8.